The primary structure comprises 630 residues: Phosphatidylinositol 4-kinase gamma 5 (630 aa).

Positions 41–98 (RRVFVQTETGCVLGLELDRSDNAHTVKRKLQVALNFPIEESSLTFGDLVLKNDLTAVR) constitute a Ubiquitin-like; degenerate domain. The PI3K/PI4K catalytic domain maps to 162–459 (GIDPVAVNSG…LIGEKDAESP (298 aa)). Residues 168–174 (VNSGLGG) are G-loop. Residues 169–175 (NSGLGGA), K190, and 279–282 (QQFI) contribute to the ATP site. Positions 312–320 (LNTDRHSGN) are catalytic loop. The activation loop stretch occupies residues 339 to 365 (PIDHGLCLPETLEDPYFEWIHWPQASI). D341 contacts ATP. Residues 500–527 (LSKVEETTEDGEEEEEEDREEEENDRAD) form a disordered region. Residues 506–524 (TTEDGEEEEEEDREEEEND) show a composition bias toward acidic residues. At S571 the chain carries Phosphoserine.

Belongs to the PI3/PI4-kinase family. Type II PI4K subfamily. Interacts with AHK2.

The catalysed reaction is a 1,2-diacyl-sn-glycero-3-phospho-(1D-myo-inositol) + ATP = a 1,2-diacyl-sn-glycero-3-phospho-(1D-myo-inositol 4-phosphate) + ADP + H(+). Its function is as follows. The phosphorylation of phosphatidylinositol (PI) to PI4P is the first committed step in the generation of phosphatidylinositol 4,5-bisphosphate (PIP2), a precursor of the second messenger inositol 1,4,5-trisphosphate (InsP3). This Arabidopsis thaliana (Mouse-ear cress) protein is Phosphatidylinositol 4-kinase gamma 5 (PI4KG5).